A 465-amino-acid chain; its full sequence is Glycine--tRNA ligase (465 aa).

Substrate contacts are provided by Arg-98 and Glu-174. Residues 206 to 208 (RNE), 216 to 221 (FRTREF), 290 to 291 (EL), and 334 to 337 (GADR) each bind ATP. Residue 221–225 (FEQME) coordinates substrate. Substrate is bound at residue 330–334 (EPSLG).

This sequence belongs to the class-II aminoacyl-tRNA synthetase family. Homodimer.

The protein localises to the cytoplasm. It catalyses the reaction tRNA(Gly) + glycine + ATP = glycyl-tRNA(Gly) + AMP + diphosphate. Its function is as follows. Catalyzes the attachment of glycine to tRNA(Gly). This chain is Glycine--tRNA ligase, found in Agathobacter rectalis (strain ATCC 33656 / DSM 3377 / JCM 17463 / KCTC 5835 / VPI 0990) (Eubacterium rectale).